The sequence spans 539 residues: Lysosomal cobalamin transport escort protein LMBD1 (539 aa).

Residues 1 to 7 (MATGSTE) are Extracellular-facing. A helical membrane pass occupies residues 8-28 (LLIGWCIFGVLLLAILAFCWV). Over 29-47 (YVRKYQSHQESEVISTITA) the chain is Cytoplasmic. Residues 48–68 (ISSLAIALITSALLPVDIFLV) form a helical membrane-spanning segment. Residues 69–98 (SFMKNHNGTFKDWAESNTTRLQIENTVLIG) lie on the Extracellular side of the membrane. Asparagine 75 and asparagine 85 each carry an N-linked (GlcNAc...) asparagine glycan. The chain crosses the membrane as a helical span at residues 99–119 (YYTLYSIILFCVFLWIPFVYF). Residues 120–142 (YYEEKDDTDGSQCSQIANAFKYT) are Cytoplasmic-facing. Residues 143 to 163 (SGFILVCSCLLLIGAFAPLDI) traverse the membrane as a helical segment. Over 164-186 (HTNKNSTDLDKIKLLFLELGSSN) the chain is Extracellular. N-linked (GlcNAc...) asparagine glycosylation is present at asparagine 168. A helical membrane pass occupies residues 187 to 207 (GLAALSFSISSLTLIGMLAAI). Residues 208–303 (TYTAYGMSAL…KCCIVIRPFK (96 aa)) are Cytoplasmic-facing. A helical membrane pass occupies residues 304 to 324 (IIWGILFILVALLFIVSLFLS). At 325–362 (NLDKALHSAGIDSGFIIFGTNLTNPLNMLLPVLQTVFP) the chain is on the extracellular side. Asparagine 345 carries N-linked (GlcNAc...) asparagine glycosylation. A helical membrane pass occupies residues 363 to 383 (LDYIFITIITMYFIFTSMAGI). Residues 384–406 (RNMGIWFFWIRLYKIRRRRTRPQ) lie on the Cytoplasmic side of the membrane. The helical transmembrane segment at 407-427 (ALLFLCMILLLIVLHTSYMIY) threads the bilayer. Residues 428–484 (SLAPQYVMYGSQKYLWENNSTQETAIGNSSASVLKDCDASAPEDQCTVTRTYLFLHK) are Extracellular-facing. 3 N-linked (GlcNAc...) asparagine glycosylation sites follow: asparagine 445, asparagine 446, and asparagine 455. The chain crosses the membrane as a helical span at residues 485–505 (FWFFSSIYYFGNWAFIVVFVI). Residues 506 to 539 (GLIVSCCKGKKSVIEGEVEDDDSDLSDDEEHPYA) are Cytoplasmic-facing.

The protein belongs to the LIMR family. LMBRD1 subfamily.

It is found in the endoplasmic reticulum membrane. Its subcellular location is the lysosome membrane. The protein localises to the cell membrane. In terms of biological role, lysosomal membrane chaperone required to export cobalamin (vitamin B12) from the lysosome to the cytosol, allowing its conversion to cofactors. Targets ABCD4 transporter from the endoplasmic reticulum to the lysosome. Then forms a complex with lysosomal ABCD4 and cytoplasmic MMACHC to transport cobalamin across the lysosomal membrane. May play a role in mediating and regulating the internalization of the insulin receptor. The polypeptide is Lysosomal cobalamin transport escort protein LMBD1 (lmbrd1) (Xenopus tropicalis (Western clawed frog)).